The sequence spans 210 residues: Orotate phosphoribosyltransferase (210 aa).

5-phospho-alpha-D-ribose 1-diphosphate contacts are provided by residues Arg96, Lys100, His102, and 122 to 130; that span reads EDLISTGGS. Ser126 contributes to the orotate binding site.

The protein belongs to the purine/pyrimidine phosphoribosyltransferase family. PyrE subfamily. In terms of assembly, homodimer. Requires Mg(2+) as cofactor.

The catalysed reaction is orotidine 5'-phosphate + diphosphate = orotate + 5-phospho-alpha-D-ribose 1-diphosphate. It participates in pyrimidine metabolism; UMP biosynthesis via de novo pathway; UMP from orotate: step 1/2. In terms of biological role, catalyzes the transfer of a ribosyl phosphate group from 5-phosphoribose 1-diphosphate to orotate, leading to the formation of orotidine monophosphate (OMP). This is Orotate phosphoribosyltransferase from Streptococcus pneumoniae (strain ATCC BAA-255 / R6).